The primary structure comprises 715 residues: Polyribonucleotide nucleotidyltransferase (715 aa).

The Mg(2+) site is built by Asp-490 and Asp-496. The KH domain maps to 557–616; the sequence is PRIETMTIPTDKIREVIGSGGKVIREIVETSGAKVDISDDGTIKIASANADSIKKAYDMI. Residues 626-694 form the S1 motif domain; sequence GKIYVGKVVK…DRGKVRLGMK (69 aa).

It belongs to the polyribonucleotide nucleotidyltransferase family. It depends on Mg(2+) as a cofactor.

It is found in the cytoplasm. It catalyses the reaction RNA(n+1) + phosphate = RNA(n) + a ribonucleoside 5'-diphosphate. Functionally, involved in mRNA degradation. Catalyzes the phosphorolysis of single-stranded polyribonucleotides processively in the 3'- to 5'-direction. This is Polyribonucleotide nucleotidyltransferase from Paracoccus denitrificans (strain Pd 1222).